The chain runs to 894 residues: DNA mismatch repair protein MutS (894 aa).

An ATP-binding site is contributed by 607–614 (GPNMSGKS).

The protein belongs to the DNA mismatch repair MutS family.

In terms of biological role, this protein is involved in the repair of mismatches in DNA. It is possible that it carries out the mismatch recognition step. This protein has a weak ATPase activity. This chain is DNA mismatch repair protein MutS, found in Bacillus cereus (strain ZK / E33L).